The chain runs to 209 residues: Large ribosomal subunit protein uL3 (209 aa).

Position 150 is an N5-methylglutamine (Gln150).

This sequence belongs to the universal ribosomal protein uL3 family. In terms of assembly, part of the 50S ribosomal subunit. Forms a cluster with proteins L14 and L19. In terms of processing, methylated by PrmB.

Its function is as follows. One of the primary rRNA binding proteins, it binds directly near the 3'-end of the 23S rRNA, where it nucleates assembly of the 50S subunit. This is Large ribosomal subunit protein uL3 from Proteus mirabilis (strain HI4320).